We begin with the raw amino-acid sequence, 271 residues long: Formamidopyrimidine-DNA glycosylase (271 aa).

P2 serves as the catalytic Schiff-base intermediate with DNA. The Proton donor role is filled by E3. The active-site Proton donor; for beta-elimination activity is the K57. DNA contacts are provided by H90, R109, and K151. Residues 236 to 270 (HVYGRGGETCTQCGNLLSEIKLGQRATVFCGLCQP) form an FPG-type zinc finger. R260 acts as the Proton donor; for delta-elimination activity in catalysis.

It belongs to the FPG family. As to quaternary structure, monomer. The cofactor is Zn(2+).

It carries out the reaction Hydrolysis of DNA containing ring-opened 7-methylguanine residues, releasing 2,6-diamino-4-hydroxy-5-(N-methyl)formamidopyrimidine.. The catalysed reaction is 2'-deoxyribonucleotide-(2'-deoxyribose 5'-phosphate)-2'-deoxyribonucleotide-DNA = a 3'-end 2'-deoxyribonucleotide-(2,3-dehydro-2,3-deoxyribose 5'-phosphate)-DNA + a 5'-end 5'-phospho-2'-deoxyribonucleoside-DNA + H(+). In terms of biological role, involved in base excision repair of DNA damaged by oxidation or by mutagenic agents. Acts as a DNA glycosylase that recognizes and removes damaged bases. Has a preference for oxidized purines, such as 7,8-dihydro-8-oxoguanine (8-oxoG). Has AP (apurinic/apyrimidinic) lyase activity and introduces nicks in the DNA strand. Cleaves the DNA backbone by beta-delta elimination to generate a single-strand break at the site of the removed base with both 3'- and 5'-phosphates. The polypeptide is Formamidopyrimidine-DNA glycosylase (Shewanella loihica (strain ATCC BAA-1088 / PV-4)).